Here is a 279-residue protein sequence, read N- to C-terminus: Nucleotide-binding protein THA_1518 (279 aa).

Residue 9–16 (GLSGAGKS) coordinates ATP. 57-60 (DARS) contacts GTP.

This sequence belongs to the RapZ-like family.

In terms of biological role, displays ATPase and GTPase activities. The polypeptide is Nucleotide-binding protein THA_1518 (Thermosipho africanus (strain TCF52B)).